Here is a 185-residue protein sequence, read N- to C-terminus: Large ribosomal subunit protein uL5 (185 aa).

This sequence belongs to the universal ribosomal protein uL5 family. Part of the 50S ribosomal subunit; part of the 5S rRNA/L5/L18/L25 subcomplex. Contacts the 5S rRNA and the P site tRNA. Forms a bridge to the 30S subunit in the 70S ribosome.

Its function is as follows. This is one of the proteins that bind and probably mediate the attachment of the 5S RNA into the large ribosomal subunit, where it forms part of the central protuberance. In the 70S ribosome it contacts protein S13 of the 30S subunit (bridge B1b), connecting the 2 subunits; this bridge is implicated in subunit movement. Contacts the P site tRNA; the 5S rRNA and some of its associated proteins might help stabilize positioning of ribosome-bound tRNAs. The protein is Large ribosomal subunit protein uL5 of Brucella abortus (strain S19).